Here is a 77-residue protein sequence, read N- to C-terminus: Major pilus subunit operon regulatory protein (77 aa).

It to E.coli AfaF and DaaF.

In terms of biological role, plays a role in the inhibition of methylation at the GATC1028 site located in the regulatory region upstream of the pabA promoter. May, in conjunction with the Mbf (methylation blocking factor), inhibits deoxyadenosine methylase from methylating the GATC1028 site. In Escherichia coli, this protein is Major pilus subunit operon regulatory protein (papI).